Consider the following 427-residue polypeptide: Peptidase B (427 aa).

The Mn(2+) site is built by lysine 195 and aspartate 200. Residue lysine 207 is part of the active site. Mn(2+)-binding residues include aspartate 218, aspartate 277, and glutamate 279. The active site involves arginine 281.

This sequence belongs to the peptidase M17 family. As to quaternary structure, homohexamer. Mn(2+) is required as a cofactor.

The protein resides in the cytoplasm. It catalyses the reaction Release of an N-terminal amino acid, Xaa, from a peptide or arylamide. Xaa is preferably Glu or Asp but may be other amino acids, including Leu, Met, His, Cys and Gln.. Functionally, probably plays an important role in intracellular peptide degradation. This is Peptidase B from Shigella flexneri serotype 5b (strain 8401).